The following is a 235-amino-acid chain: UPF0502 protein Bcep18194_B0081 (235 aa).

The protein belongs to the UPF0502 family.

The protein is UPF0502 protein Bcep18194_B0081 of Burkholderia lata (strain ATCC 17760 / DSM 23089 / LMG 22485 / NCIMB 9086 / R18194 / 383).